The following is a 262-amino-acid chain: Pyridoxine 5'-phosphate synthase (262 aa).

A 3-amino-2-oxopropyl phosphate-binding site is contributed by Asn-6. 8 to 9 (DH) contributes to the 1-deoxy-D-xylulose 5-phosphate binding site. Position 17 (Arg-17) interacts with 3-amino-2-oxopropyl phosphate. Catalysis depends on His-43, which acts as the Proton acceptor. The 1-deoxy-D-xylulose 5-phosphate site is built by Arg-45 and His-50. Residue Glu-70 is the Proton acceptor of the active site. Thr-102 contributes to the 1-deoxy-D-xylulose 5-phosphate binding site. The Proton donor role is filled by His-215. 3-amino-2-oxopropyl phosphate contacts are provided by residues Gly-216 and 237-238 (GH).

It belongs to the PNP synthase family. As to quaternary structure, homooctamer; tetramer of dimers.

The protein localises to the cytoplasm. The enzyme catalyses 3-amino-2-oxopropyl phosphate + 1-deoxy-D-xylulose 5-phosphate = pyridoxine 5'-phosphate + phosphate + 2 H2O + H(+). It functions in the pathway cofactor biosynthesis; pyridoxine 5'-phosphate biosynthesis; pyridoxine 5'-phosphate from D-erythrose 4-phosphate: step 5/5. In terms of biological role, catalyzes the complicated ring closure reaction between the two acyclic compounds 1-deoxy-D-xylulose-5-phosphate (DXP) and 3-amino-2-oxopropyl phosphate (1-amino-acetone-3-phosphate or AAP) to form pyridoxine 5'-phosphate (PNP) and inorganic phosphate. The sequence is that of Pyridoxine 5'-phosphate synthase from Helicobacter pylori (strain G27).